Reading from the N-terminus, the 208-residue chain is Interferon epsilon (208 aa).

Positions Met-1 to Ser-21 are cleaved as a signal peptide. Cys-53 and Cys-163 are oxidised to a cystine. Residues Asn-95 and Asn-104 are each glycosylated (N-linked (GlcNAc...) asparagine).

Belongs to the alpha/beta interferon family. As to expression, endometrium-specific.

The protein localises to the secreted. Type I interferon required for maintaining basal levels of IFN-regulated genes, including 2'-5'-oligoadenylate synthetase, IRF7 and ISG15, in the female reproductive tract. Directly mediates protection against viral and bacterial genital infections. The protein is Interferon epsilon (IFNE) of Homo sapiens (Human).